Consider the following 77-residue polypeptide: Acyl carrier protein (77 aa).

One can recognise a Carrier domain in the interval 1 to 76; that stretch reads MENFDKVKDI…DAVKFINSIE (76 aa). S36 is subject to O-(pantetheine 4'-phosphoryl)serine.

This sequence belongs to the acyl carrier protein (ACP) family. In terms of processing, 4'-phosphopantetheine is transferred from CoA to a specific serine of apo-ACP by AcpS. This modification is essential for activity because fatty acids are bound in thioester linkage to the sulfhydryl of the prosthetic group.

The protein resides in the cytoplasm. The protein operates within lipid metabolism; fatty acid biosynthesis. Its function is as follows. Carrier of the growing fatty acid chain in fatty acid biosynthesis. This is Acyl carrier protein from Staphylococcus saprophyticus subsp. saprophyticus (strain ATCC 15305 / DSM 20229 / NCIMB 8711 / NCTC 7292 / S-41).